We begin with the raw amino-acid sequence, 110 residues long: UPF0060 membrane protein RSp1275 (110 aa).

4 consecutive transmembrane segments (helical) span residues 8–28, 33–53, 63–83, and 90–110; these read FLFA…WLVL, SAWL…LLTL, AAYG…VDGA, and IGGA…PQPT.

The protein belongs to the UPF0060 family.

The protein resides in the cell inner membrane. This is UPF0060 membrane protein RSp1275 from Ralstonia nicotianae (strain ATCC BAA-1114 / GMI1000) (Ralstonia solanacearum).